The sequence spans 347 residues: Cytosolic sulfotransferase 14 (347 aa).

87–92 (KSGTTW) lines the 3'-phosphoadenylyl sulfate pocket. The Proton acceptor role is filled by histidine 155. 3'-phosphoadenylyl sulfate contacts are provided by residues arginine 177, serine 185, tyrosine 244, and 310–312 (RKG).

This sequence belongs to the sulfotransferase 1 family.

Its subcellular location is the cytoplasm. Sulfotransferase that utilizes 3'-phospho-5'-adenylyl sulfate (PAPS) as sulfonate donor. Not active with 11-hydroxyjasmonate or 12-hydroxyjasmonate. This is Cytosolic sulfotransferase 14 (SOT14) from Arabidopsis thaliana (Mouse-ear cress).